A 548-amino-acid polypeptide reads, in one-letter code: Cilia- and flagella-associated protein 97 (548 aa).

Ser-8 and Ser-19 each carry phosphoserine. Disordered stretches follow at residues 85–297 (NYLT…RQEN), 407–431 (LSRQ…PPKL), and 497–548 (YSPL…LRSH). Residues 91-107 (GNERKPKFPSKEQHVEN) are compositionally biased toward basic and acidic residues. Over residues 112–121 (TRSPSLLTSS) the composition is skewed to low complexity. Acidic residues predominate over residues 152 to 161 (DYYTDGEESS). Thr-155 carries the post-translational modification Phosphothreonine. 2 positions are modified to phosphoserine: Ser-160 and Ser-161. The segment covering 191–209 (KASSSSLSSSSSRSSSDCS) has biased composition (low complexity). Residues 214 to 237 (DMQNKPDSGSSGKRVSSVTPSSPK) show a composition bias toward polar residues. Residue Ser-235 is modified to Phosphoserine. The span at 238 to 248 (QKCKSGRKSSA) shows a compositional bias: basic residues. Ser-259 carries the phosphoserine modification. The segment covering 264-289 (TDVTPASTPDSSPAQPFELSQSQNQK) has biased composition (polar residues). Residues 383-460 (RKNYSFTREE…ALLKRLEAVK (78 aa)) adopt a coiled-coil conformation. Composition is skewed to polar residues over residues 504–514 (SRTSSATSGLS) and 537–548 (IQCSNSKVLRSH).

This sequence belongs to the CFAP97 family.

The sequence is that of Cilia- and flagella-associated protein 97 from Rattus norvegicus (Rat).